A 147-amino-acid polypeptide reads, in one-letter code: uncharacterized protein (147 aa).

The Rhodanese domain maps to 52 to 145; the sequence is YDRCLLIIDA…WLSNNYPTVC (94 aa).

This is an uncharacterized protein from Buchnera aphidicola subsp. Baizongia pistaciae (strain Bp).